Consider the following 670-residue polypeptide: Probable membrane-anchored ferredoxin csal_0991 (670 aa).

The next 5 membrane-spanning stretches (helical) occupy residues 2-22, 68-90, 94-113, 135-155, and 159-179; these read LDIL…IGAV, VATA…LGLA, LGWL…LFVA, LMAF…VLPA, and GWLV…ELVF. 2 consecutive 4Fe-4S ferredoxin-type domains span residues 241-271 and 316-347; these read WNQL…PLNP and GTAL…HVDA. Residues C250, C253, C256, C260, C328, C331, C334, and C338 each coordinate [4Fe-4S] cluster. Positions 648 to 670 are disordered; the sequence is NTPPATPASHDTAASQATEEVLS. A compositionally biased stretch (polar residues) spans 659–670; sequence TAASQATEEVLS.

The cofactor is [4Fe-4S] cluster.

The protein localises to the cell inner membrane. Functionally, participates in the electron transfer process during N,N-dimethylglycine (DMG) degradation to sarcosine. Probably transfers the electrons from N,N-dimethylglycine/sarcosine dehydrogenase (DMGDH) to the electron transfer flavoprotein (ETF) EtfA-EtfB. The polypeptide is Probable membrane-anchored ferredoxin csal_0991 (Chromohalobacter salexigens (strain ATCC BAA-138 / DSM 3043 / CIP 106854 / NCIMB 13768 / 1H11)).